Reading from the N-terminus, the 98-residue chain is Glutaredoxin 1 (98 aa).

Positions 1-98 constitute a Glutaredoxin domain; sequence MNKAILHAII…KLLEGQPKKD (98 aa). Cys-17 and Cys-20 are disulfide-bonded.

Belongs to the glutaredoxin family. As to quaternary structure, monomer.

Its subcellular location is the cytoplasm. Its function is as follows. Has a glutathione-disulfide oxidoreductase activity in the presence of NADPH and glutathione reductase. Reduces low molecular weight disulfides and proteins. The protein is Glutaredoxin 1 (grxC1) of Rickettsia bellii (strain RML369-C).